A 343-amino-acid chain; its full sequence is Aspartate-semialdehyde dehydrogenase (343 aa).

NADP(+)-binding positions include 13 to 16 (TGAV) and 41 to 42 (KS). Residue Arg-103 participates in phosphate binding. Cys-134 acts as the Acyl-thioester intermediate in catalysis. A substrate-binding site is contributed by Gln-161. Residue 164-165 (SG) coordinates NADP(+). Phosphate is bound at residue Lys-220. Arg-241 lines the substrate pocket. His-248 serves as the catalytic Proton acceptor. Gln-321 contributes to the NADP(+) binding site.

It belongs to the aspartate-semialdehyde dehydrogenase family. As to quaternary structure, homodimer.

It carries out the reaction L-aspartate 4-semialdehyde + phosphate + NADP(+) = 4-phospho-L-aspartate + NADPH + H(+). It participates in amino-acid biosynthesis; L-lysine biosynthesis via DAP pathway; (S)-tetrahydrodipicolinate from L-aspartate: step 2/4. The protein operates within amino-acid biosynthesis; L-methionine biosynthesis via de novo pathway; L-homoserine from L-aspartate: step 2/3. Its pathway is amino-acid biosynthesis; L-threonine biosynthesis; L-threonine from L-aspartate: step 2/5. Functionally, catalyzes the NADPH-dependent formation of L-aspartate-semialdehyde (L-ASA) by the reductive dephosphorylation of L-aspartyl-4-phosphate. In Campylobacter jejuni subsp. jejuni serotype O:2 (strain ATCC 700819 / NCTC 11168), this protein is Aspartate-semialdehyde dehydrogenase.